Consider the following 282-residue polypeptide: MSIDAKLVKELREKTGAGMMDCKKALEESGGDMEKAITWLRQKGLAGAAKKASRVAAEGVVDSYIHFGNRIGVLVEVNCETDFVARNEDFKKLVQDIAKQIAACQSVEYVSIDQIPPEVVERERAIEMGKEDLASKPENVREKIVQGRIEKRLKELSLMDQPFIKDSSITVEELVKQHIAKLGENIRVRRFARFVLGEGIEKQEADFAAEVAAQAGLKPAQPAQVAEVAAAPPAEPVADQPAAEPPAESVAPEPVVAESADAEPAPAAEGKPSKKGSTKKKK.

The segment at 81–84 (TDFV) is involved in Mg(2+) ion dislocation from EF-Tu. The segment covering 218–270 (KPAQPAQVAEVAAAPPAEPVADQPAAEPPAESVAPEPVVAESADAEPAPAAEG) has biased composition (low complexity). The tract at residues 218–282 (KPAQPAQVAE…SKKGSTKKKK (65 aa)) is disordered. A compositionally biased stretch (basic residues) spans 273–282 (SKKGSTKKKK).

Belongs to the EF-Ts family.

The protein localises to the cytoplasm. Its function is as follows. Associates with the EF-Tu.GDP complex and induces the exchange of GDP to GTP. It remains bound to the aminoacyl-tRNA.EF-Tu.GTP complex up to the GTP hydrolysis stage on the ribosome. The polypeptide is Elongation factor Ts (Synechococcus sp. (strain JA-3-3Ab) (Cyanobacteria bacterium Yellowstone A-Prime)).